Reading from the N-terminus, the 1017-residue chain is Pro-apoptotic serine protease NMA111 (1017 aa).

Positions 1 to 46 (MDQNGASTEARSKRKQPPTSPSTDRPLKQIKPEVDAHTRNGVPKSP) are disordered. Residues 25 to 38 (RPLKQIKPEVDAHT) show a composition bias toward basic and acidic residues. Residues 88 to 278 (VVSIHFCQTC…LPLDRPLRAL (191 aa)) form a serine protease region. Catalysis depends on charge relay system residues His126, Asp157, and Ser239. 2 PDZ domains span residues 305–383 (RRLG…QRAG) and 879–960 (SFCG…MTFD).

It belongs to the peptidase S1C family.

It is found in the nucleus. Nuclear serine protease which mediates apoptosis. The polypeptide is Pro-apoptotic serine protease NMA111 (NMA111) (Phaeosphaeria nodorum (strain SN15 / ATCC MYA-4574 / FGSC 10173) (Glume blotch fungus)).